The sequence spans 373 residues: Cobalt-precorrin-5B C(1)-methyltransferase (373 aa).

Belongs to the CbiD family.

It carries out the reaction Co-precorrin-5B + S-adenosyl-L-methionine = Co-precorrin-6A + S-adenosyl-L-homocysteine. It participates in cofactor biosynthesis; adenosylcobalamin biosynthesis; cob(II)yrinate a,c-diamide from sirohydrochlorin (anaerobic route): step 6/10. Functionally, catalyzes the methylation of C-1 in cobalt-precorrin-5B to form cobalt-precorrin-6A. The polypeptide is Cobalt-precorrin-5B C(1)-methyltransferase (Halorhodospira halophila (strain DSM 244 / SL1) (Ectothiorhodospira halophila (strain DSM 244 / SL1))).